Here is a 140-residue protein sequence, read N- to C-terminus: Large ribosomal subunit protein bL17 (140 aa).

It belongs to the bacterial ribosomal protein bL17 family. Part of the 50S ribosomal subunit. Contacts protein L32.

This chain is Large ribosomal subunit protein bL17, found in Beijerinckia indica subsp. indica (strain ATCC 9039 / DSM 1715 / NCIMB 8712).